We begin with the raw amino-acid sequence, 155 residues long: MSQVILDLQLACEDHSGLPEESQFQTWLNAVIPQFQEESEVTIRLVDEAESHDLNLTYRGKDKPTNVLSFPFEAPPGMEMPLLGDLIICRQVVEQEAKEQDKPLEAHWAHMVVHGSLHLLGYDHIEDDEAEEMEALETEIMLALGYEDPYISEKD.

Residues histidine 114, histidine 118, and histidine 124 each coordinate Zn(2+).

This sequence belongs to the endoribonuclease YbeY family. Zn(2+) is required as a cofactor.

It localises to the cytoplasm. Functionally, single strand-specific metallo-endoribonuclease involved in late-stage 70S ribosome quality control and in maturation of the 3' terminus of the 16S rRNA. In Citrobacter koseri (strain ATCC BAA-895 / CDC 4225-83 / SGSC4696), this protein is Endoribonuclease YbeY.